A 64-amino-acid chain; its full sequence is SPbeta prophage-derived uncharacterized protein YopV (64 aa).

In Bacillus subtilis (strain 168), this protein is SPbeta prophage-derived uncharacterized protein YopV (yopV).